The chain runs to 189 residues: MAQEKRGSRDDRQNREERDSEFVDKLVAINRVAKVVKGGRRFGFAALVVVGDQKGRVGFGHGKAREVPEAIRKATESAKRDLIFVPLRDGRTLHHDVNGRHGAGKVLLRSAKAGTGIIAGGPMRAVFETLGVHDVVAKSTGSSNPYNMVRATFDALKHQVHPKDIAAQRGLKYATLQARRAASGNASEE.

An S5 DRBM domain is found at 22-85 (FVDKLVAINR…ESAKRDLIFV (64 aa)).

This sequence belongs to the universal ribosomal protein uS5 family. In terms of assembly, part of the 30S ribosomal subunit. Contacts proteins S4 and S8.

In terms of biological role, with S4 and S12 plays an important role in translational accuracy. Functionally, located at the back of the 30S subunit body where it stabilizes the conformation of the head with respect to the body. The sequence is that of Small ribosomal subunit protein uS5 from Agrobacterium fabrum (strain C58 / ATCC 33970) (Agrobacterium tumefaciens (strain C58)).